Consider the following 351-residue polypeptide: uncharacterized protein (351 aa).

This sequence belongs to the bacterial luciferase oxidoreductase family.

This is an uncharacterized protein from Sinorhizobium fredii (strain NBRC 101917 / NGR234).